A 254-amino-acid polypeptide reads, in one-letter code: Decaprenylphosphoryl-2-keto-beta-D-erythro-pentose reductase (254 aa).

Asp-67 is an NAD(+) binding site. The active-site Proton acceptor is the Tyr-160. Residue Lys-164 participates in NAD(+) binding.

It belongs to the short-chain dehydrogenases/reductases (SDR) family. In terms of assembly, interacts with DprE1 to form an epimerase complex.

The protein resides in the periplasm. The catalysed reaction is trans,octa-cis-decaprenylphospho-beta-D-arabinofuranose + NAD(+) = trans,octa-cis-decaprenylphospho-beta-D-erythro-pentofuranosid-2-ulose + NADH + H(+). It functions in the pathway cell wall biogenesis; cell wall polysaccharide biosynthesis. Component of the DprE1-DprE2 complex that catalyzes the 2-step epimerization of decaprenyl-phospho-ribose (DPR) to decaprenyl-phospho-arabinose (DPA), a key precursor that serves as the arabinose donor required for the synthesis of cell-wall arabinans. DprE1 catalyzes the first step of epimerization, namely FAD-dependent oxidation of the C2' hydroxyl of DPR to yield the keto intermediate decaprenyl-phospho-2'-keto-D-arabinose (DPX). The intermediate DPX is then transferred to DprE2 subunit of the epimerase complex, most probably through a 'substrate channel' at the interface of DprE1-DprE2 complex. DprE2 then catalyzes the second step of epimerization, the NAD(+)-dependent reduction of DPX that leads to the formation of DPA. In Mycolicibacterium smegmatis (strain ATCC 700084 / mc(2)155) (Mycobacterium smegmatis), this protein is Decaprenylphosphoryl-2-keto-beta-D-erythro-pentose reductase.